Here is a 180-residue protein sequence, read N- to C-terminus: Large ribosomal subunit protein uL5 (180 aa).

This sequence belongs to the universal ribosomal protein uL5 family. As to quaternary structure, part of the 50S ribosomal subunit; part of the 5S rRNA/L5/L18/L25 subcomplex. Contacts the 5S rRNA and the P site tRNA. Forms a bridge to the 30S subunit in the 70S ribosome.

Its function is as follows. This is one of the proteins that bind and probably mediate the attachment of the 5S RNA into the large ribosomal subunit, where it forms part of the central protuberance. In the 70S ribosome it contacts protein S13 of the 30S subunit (bridge B1b), connecting the 2 subunits; this bridge is implicated in subunit movement. Contacts the P site tRNA; the 5S rRNA and some of its associated proteins might help stabilize positioning of ribosome-bound tRNAs. This Lactobacillus helveticus (strain DPC 4571) protein is Large ribosomal subunit protein uL5.